A 591-amino-acid chain; its full sequence is MEGKNEDMHTPRGPEDASNIADEYPSPERQQQGDMLGHDIHHHLDMHHERDARDTHSPGQTDMQTELAKQVAAQAIEAAVAHVQANADRQEAGGTEACGQVSNGNQRDIHMREEPHLSNSQHHPRQPVFPRSRQSFIALSPTSVATSIAGPSTLRRSPLPDTFSRSPAPLSANDQIAILRESYARNPNPDRKELERLAARTGRPWNKIREYFRQRRNKLRGLEQLEKMEEPGRASGWLQITYRSAPVTSQVPQLALYNSYRHRFDPYSSSTPLLGGQDLIQLACATFPGCEMARDDGEYVLKGLKEKDKEREDALGDNEAMGRKGREIDPEEWERGMEGLVEPLRAGSWLLSSFQSQPGTSGSDITQTDLYTSYAARFSSLLTGVSGTSNGNAHLNGHHGLSDEEAELRNHAESLKAFEDAGLGDTQGEEDQPPTVEESDQNETSPASFPADPNPLPQAPRESRLLTPVELINLTRMTFPACEPCVDSSGRFVIKGLERREGLEPGRKSREGEMFPFALMSEKQPGEEFVKVMKRKLASLHPDAIERRNAGESKRKRDDALTEEDKELIEGLKRFRGSKLGEQVRDVCVSQ.

The segment covering 1-15 has biased composition (basic and acidic residues); that stretch reads MEGKNEDMHTPRGPE. Disordered regions lie at residues 1 to 37 and 148 to 168; these read MEGK…DMLG and IAGP…RSPA. Positions 176 to 223 form a DNA-binding region, homeobox; that stretch reads IAILRESYARNPNPDRKELERLAARTGRPWNKIREYFRQRRNKLRGLE. Disordered regions lie at residues 420 to 463 and 543 to 563; these read DAGL…PRES and DAIE…ALTE. Positions 427–441 are enriched in acidic residues; the sequence is QGEEDQPPTVEESDQ. Positions 543-560 are enriched in basic and acidic residues; the sequence is DAIERRNAGESKRKRDDA.

Its subcellular location is the nucleus. General stress-responsive transcription factor that governs multiple stress responses and adaptations. Plays a key role in virulence. Mediates the expression of LAC1, which is the major laccase involved in melanin synthesis. Positively regulates BZP4 induction under conditions of nutrient starvation and basal expression levels of MBS1 and USV101, 3 major transcription factors that independently contribute to melanin production. Also acts as a key regulator of ergosterol gene expression. This chain is Homeobox domain-containing transcription factor HOB1, found in Cryptococcus neoformans var. grubii serotype A (strain H99 / ATCC 208821 / CBS 10515 / FGSC 9487) (Filobasidiella neoformans var. grubii).